Here is a 3573-residue protein sequence, read N- to C-terminus: Zinc finger homeobox protein 4 (3573 aa).

The span at 1 to 28 (METCDSPTISRQENGQSTSKLCGTTQLD) shows a compositional bias: polar residues. 3 disordered regions span residues 1–54 (METC…LRTD), 425–479 (LSHS…DTYS), and 522–606 (TSSS…GSPG). Basic and acidic residues-rich tracts occupy residues 39 to 54 (EPDRENSSTDDNLRTD) and 434 to 452 (KLSESKDQENNCERQKETN). Residues 468–479 (EPVEEEDEDTYS) show a composition bias toward acidic residues. Positions 585-599 (SVTPHQHSFTPSTPS) are enriched in polar residues. C2H2-type zinc fingers lie at residues 609-632 (IECPKCDTVLGSSRSLGGHMTMMH), 640-663 (LKCPKCNWHYKYQQTLEAHMKEKH), and 695-719 (FRCEVCNYSTTTKGNLSIHMQSDKH). The C2H2-type 4; degenerate zinc finger occupies 763-785 (WRCEVCDYETNVARNLRIHMTSE). C2H2-type zinc fingers lie at residues 913–937 (YQCKLCNYNTQLKANFQLHCKTDKH), 969–991 (LKCNACDYYTNSVDKLRLHTTNH), and 1017–1041 (YYCALCDYSTKVKLNLVQHVRSVKH). Positions 1096 to 1132 (GEDTEGSAKSTSVAIGDDKDSSERDNTEAKKSSKDSV) are disordered. The span at 1111-1129 (GDDKDSSERDNTEAKKSSK) shows a compositional bias: basic and acidic residues. 2 C2H2-type zinc fingers span residues 1168 to 1191 (YQCPYCNYNSRDPNRIQMHVLSQH) and 1197 to 1220 (ICCPLCQDVLSNKMHLQLHLTHLH). The disordered stretch occupies residues 1250-1340 (AASEKSERDT…EQQKKQQLSV (91 aa)). Over residues 1277-1306 (VDEKSTPGTDESKPGMEIKSEEQKPPKESA) the composition is skewed to basic and acidic residues. Over residues 1322 to 1340 (TDSMPDQLNEQQKKQQLSV) the composition is skewed to polar residues. 2 C2H2-type zinc fingers span residues 1348-1370 (YRCNHCSLAFKTMQKLQIHSQYH) and 1376-1399 (TMCSLCQRSFRTFQALKKHLEAGH). The disordered stretch occupies residues 1442–1476 (YEMEQEGKASPVGSDSSSIPDDMGSEPKRTLPFRK). C2H2-type zinc fingers lie at residues 1492-1518 (YKCTVCKESFTQKNILLVHYNSVSHLH) and 1544-1568 (YKCSICNVAYSQSSTLEIHMRSVLH). Disordered stretches follow at residues 1577 to 1596 (LEPSGNISSGNSVAGNVNSP) and 1795 to 1843 (YKES…IASG). The segment covering 1580–1596 (SGNISSGNSVAGNVNSP) has biased composition (low complexity). A compositionally biased stretch (basic and acidic residues) spans 1795 to 1830 (YKESEEISEKQEKPKQEFTNESEGLKENKDMKKPKS). The C2H2-type 14 zinc finger occupies 1886-1909 (LECGTCSKLFSNILILKSHQEHVH). The interval 1933-2013 (YPISPSSPET…PSAPPQVQLP (81 aa)) is disordered. Pro residues-rich tracts occupy residues 1940–1962 (PETPPPPPPPPPPPPPPPPPTPS) and 1980–2007 (LQAPPPTPPPPPPPPPPPPPPPPPPSAP). 2 DNA-binding regions (homeobox) span residues 2072-2131 (FKRP…RQRN) and 2169-2228 (KRSS…RKSY). The C2H2-type 15; degenerate zinc-finger motif lies at 2255 to 2279 (YQCKKCSVVFPRIFDLITHQKKQCY). Disordered regions lie at residues 2278–2300 (CYKDEDDDAQDESQTEDSMDASD) and 2318–2426 (SLAV…TPLQ). Residues 2281-2297 (DEDDDAQDESQTEDSMD) are compositionally biased toward acidic residues. The span at 2318-2334 (SLAVTAASSGSGSSTPL) shows a compositional bias: low complexity. Over residues 2340-2357 (PEPEKASPKSESTEKPKP) the composition is skewed to basic and acidic residues. Composition is skewed to low complexity over residues 2360–2373 (TISKQTDTTSQSSK) and 2382–2413 (PSDPQPSASQPQQQKQSQIIGRPPSTSQTTPV). The C2H2-type 16 zinc-finger motif lies at 2436-2458 (YQCDQCTVAFPTLELWQEHQHMH). The segment covering 2499–2509 (LAQMPPQTGSS) has biased composition (polar residues). Residues 2499 to 2553 (LAQMPPQTGSSHAAHPATVSGSMKRKLDDKEDNNCSEKEGGNSGEDQHRDKRLRT) are disordered. Basic and acidic residues predominate over residues 2523–2547 (RKLDDKEDNNCSEKEGGNSGEDQHR). The segment at residues 2548-2607 (DKRLRTTITPEQLEILYEKYLLDSNPTRKMLDHIAREVGLKKRVVQVWFQNTRARERKGQ) is a DNA-binding region (homeobox 3). The C2H2-type 17 zinc finger occupies 2618-2641 (KRCPFCRALFKAKSALESHIRSRH). Disordered stretches follow at residues 2704–2788 (EMSP…PKPL) and 2820–2875 (FSEK…PGHK). 2 stretches are compositionally biased toward polar residues: residues 2709–2718 (NLLSPSSFKA) and 2746–2773 (TSSINTAISDATTGDEGNNEMESTTGSS). Basic and acidic residues predominate over residues 2820 to 2829 (FSEKDGDHDQ). Residues 2874–2933 (HKRFRTQMSNLQLKVLKACFSDYRTPTMQECEMLGNEIGLPKRVVQVWFQNARAKEKKFK) constitute a DNA-binding region (homeobox 4). A C2H2-type 18; degenerate zinc finger spans residues 2952 to 2976 (PECSLCGVKYSARLSIRDHIFSKQH). Disordered stretches follow at residues 3060–3174 (PSSL…KHLK) and 3287–3343 (LQKQ…LDSK). The span at 3084-3104 (PTSATSSPALSLSSAPSKPLL) shows a compositional bias: low complexity. Pro residues predominate over residues 3105 to 3129 (QTPPPPPPPPPPPPPPPPPPPPPPS). Positions 3159–3174 (IKEEELEANKPEKHLK) are enriched in basic and acidic residues. The stretch at 3271 to 3316 (ALLQQYQQYQQNLQDSLQKQQKQQQEQQQKQVQAKSSKAENDQQQN) forms a coiled coil. Low complexity predominate over residues 3287–3305 (LQKQQKQQQEQQQKQVQAK). The segment covering 3321–3343 (SETKEDRSSATESTKEEPQLDSK) has biased composition (basic and acidic residues). Residues 3360–3384 (FICRKCQMMFTDEDAAVNHQKSFCY) form a C2H2-type 19; degenerate zinc finger. The C2H2-type 20 zinc finger occupies 3404-3428 (YQCLACDVAISGNEALSQHLQSSLH). Disordered regions lie at residues 3449–3468 (HSVCSPNPNTTSTSQSAASS) and 3518–3543 (TSGVQTSLPTESCSDESDSELSQKLE). Residues 3453 to 3468 (SPNPNTTSTSQSAASS) show a composition bias toward low complexity.

This sequence belongs to the krueppel C2H2-type zinc-finger protein family.

It is found in the nucleus. In terms of biological role, may play a role in neural and muscle differentiation. May be involved in transcriptional regulation. The sequence is that of Zinc finger homeobox protein 4 (ZFHX4) from Gallus gallus (Chicken).